Here is a 248-residue protein sequence, read N- to C-terminus: Pyridoxine 5'-phosphate synthase (248 aa).

Asparagine 10 is a 3-amino-2-oxopropyl phosphate binding site. 12–13 (DH) is a 1-deoxy-D-xylulose 5-phosphate binding site. A 3-amino-2-oxopropyl phosphate-binding site is contributed by arginine 21. The Proton acceptor role is filled by histidine 46. 2 residues coordinate 1-deoxy-D-xylulose 5-phosphate: arginine 48 and histidine 53. Glutamate 73 (proton acceptor) is an active-site residue. Position 103 (threonine 103) interacts with 1-deoxy-D-xylulose 5-phosphate. Histidine 194 serves as the catalytic Proton donor. Residues glycine 195 and 216–217 (GH) each bind 3-amino-2-oxopropyl phosphate.

The protein belongs to the PNP synthase family. In terms of assembly, homooctamer; tetramer of dimers.

It is found in the cytoplasm. The enzyme catalyses 3-amino-2-oxopropyl phosphate + 1-deoxy-D-xylulose 5-phosphate = pyridoxine 5'-phosphate + phosphate + 2 H2O + H(+). The protein operates within cofactor biosynthesis; pyridoxine 5'-phosphate biosynthesis; pyridoxine 5'-phosphate from D-erythrose 4-phosphate: step 5/5. In terms of biological role, catalyzes the complicated ring closure reaction between the two acyclic compounds 1-deoxy-D-xylulose-5-phosphate (DXP) and 3-amino-2-oxopropyl phosphate (1-amino-acetone-3-phosphate or AAP) to form pyridoxine 5'-phosphate (PNP) and inorganic phosphate. This Legionella pneumophila (strain Corby) protein is Pyridoxine 5'-phosphate synthase.